A 252-amino-acid chain; its full sequence is Imidazole glycerol phosphate synthase subunit HisF (252 aa).

Active-site residues include Asp13 and Asp132.

It belongs to the HisA/HisF family. Heterodimer of HisH and HisF.

It is found in the cytoplasm. It carries out the reaction 5-[(5-phospho-1-deoxy-D-ribulos-1-ylimino)methylamino]-1-(5-phospho-beta-D-ribosyl)imidazole-4-carboxamide + L-glutamine = D-erythro-1-(imidazol-4-yl)glycerol 3-phosphate + 5-amino-1-(5-phospho-beta-D-ribosyl)imidazole-4-carboxamide + L-glutamate + H(+). The protein operates within amino-acid biosynthesis; L-histidine biosynthesis; L-histidine from 5-phospho-alpha-D-ribose 1-diphosphate: step 5/9. Its function is as follows. IGPS catalyzes the conversion of PRFAR and glutamine to IGP, AICAR and glutamate. The HisF subunit catalyzes the cyclization activity that produces IGP and AICAR from PRFAR using the ammonia provided by the HisH subunit. The sequence is that of Imidazole glycerol phosphate synthase subunit HisF from Campylobacter curvus (strain 525.92).